Reading from the N-terminus, the 241-residue chain is uncharacterized protein (241 aa).

Residues 78 to 80, Gly111, Ile131, and 138 to 140 contribute to the S-adenosyl-L-methionine site; these read TSA and SSL.

The protein belongs to the class IV-like SAM-binding methyltransferase superfamily. RNA methyltransferase TrmH family.

This is an uncharacterized protein from Haemophilus influenzae (strain ATCC 51907 / DSM 11121 / KW20 / Rd).